The chain runs to 127 residues: Protein LLP homolog (127 aa).

Residues 1–21 (MAKSLRSKWKRKMRAEKRKKN) are compositionally biased toward basic residues. The segment at 1–24 (MAKSLRSKWKRKMRAEKRKKNAPK) is disordered. Glycyl lysine isopeptide (Lys-Gly) (interchain with G-Cter in SUMO2) cross-links involve residues Lys-65 and Lys-72. Basic residues predominate over residues 98–120 (RQRKRLKAKRERKKGKSKVKAMK). The segment at 98–127 (RQRKRLKAKRERKKGKSKVKAMKAAKGLTW) is disordered.

This sequence belongs to the learning-associated protein family. As to quaternary structure, interacts with CTCF, MYO1C and with the transcriptional machinery, including RNA polymerase II and TBP.

It localises to the nucleus. Its subcellular location is the nucleolus. The protein localises to the chromosome. In hippocampal neurons, regulates dendritic and spine growth and synaptic transmission. This chain is Protein LLP homolog (LLPH), found in Bos taurus (Bovine).